Reading from the N-terminus, the 107-residue chain is Phosphoribosyl-ATP pyrophosphatase (107 aa).

This sequence belongs to the PRA-PH family.

Its subcellular location is the cytoplasm. It catalyses the reaction 1-(5-phospho-beta-D-ribosyl)-ATP + H2O = 1-(5-phospho-beta-D-ribosyl)-5'-AMP + diphosphate + H(+). It participates in amino-acid biosynthesis; L-histidine biosynthesis; L-histidine from 5-phospho-alpha-D-ribose 1-diphosphate: step 2/9. The protein is Phosphoribosyl-ATP pyrophosphatase of Neisseria gonorrhoeae (strain ATCC 700825 / FA 1090).